A 389-amino-acid chain; its full sequence is Large envelope protein (389 aa).

Met1 carries the N-acetylmethionine modification. Gly2 is lipidated: N-myristoyl glycine; by host. Residues 2 to 108 (GQNLSTSNPL…PPLRNTHPQA (107 aa)) are pre-S1. Positions 2–163 (GQNLSTSNPL…FSRIGDPALN (162 aa)) are pre-S. Over 2 to 170 (GQNLSTSNPL…ALNMENITSG (169 aa)) the chain is Virion surface; in external conformation. The Intravirion; in internal conformation portion of the chain corresponds to 2-242 (GQNLSTSNPL…PGYRWMCLRR (241 aa)). Residues 76–103 (TLPANPPPASTNRQSGRQPTPLSPPLRN) form a disordered region. Over residues 85-95 (STNRQSGRQPT) the composition is skewed to polar residues. Positions 109–163 (MQWNSTTFHQTLQDPRVRGLYLPAGGSSSGTVNPVPTTVSPISSIFSRIGDPALN) are pre-S2. The chain crosses the membrane as a helical span at residues 171–191 (FLGPLLVLQAGFFLLTKILTI). At 192–242 (PKSLDSWWTSLNFLGGTTVCLGQNSQSPTSNHSPTSCPPTCPGYRWMCLRR) the chain is on the intravirion; in external conformation side. Residues 243-263 (FIIFLFILLLCLIFLLVLLDY) form a helical membrane-spanning segment. The Virion surface portion of the chain corresponds to 264-337 (QGMLPVCPLI…WASARFSWLS (74 aa)). An N-linked (GlcNAc...) asparagine; by host glycan is attached at Asn309. The helical transmembrane segment at 338 to 358 (LLVPFVQWFVGLSPTVWLLVI) threads the bilayer. Over 359 to 364 (WMMWYW) the chain is Intravirion. The chain crosses the membrane as a helical span at residues 365–387 (GPKLFTILSPFLPLLPIFFCLWV). Residues 388–389 (YI) lie on the Virion surface side of the membrane.

Belongs to the orthohepadnavirus major surface antigen family. In terms of assembly, in its internal form (Li-HBsAg), interacts with the capsid protein and with the isoform S. Interacts with host chaperone CANX. Associates with host chaperone CANX through its pre-S2 N glycan; this association may be essential for isoform M proper secretion. As to quaternary structure, interacts with isoform L. Interacts with the antigens of satellite virus HDV (HDVAgs); this interaction is required for encapsidation of HDV genomic RNA. Post-translationally, isoform M is N-terminally acetylated by host at a ratio of 90%, and N-glycosylated by host at the pre-S2 region. Myristoylated.

Its subcellular location is the virion membrane. The large envelope protein exists in two topological conformations, one which is termed 'external' or Le-HBsAg and the other 'internal' or Li-HBsAg. In its external conformation the protein attaches the virus to cell receptors and thereby initiating infection. This interaction determines the species specificity and liver tropism. This attachment induces virion internalization predominantly through caveolin-mediated endocytosis. The large envelope protein also assures fusion between virion membrane and endosomal membrane. In its internal conformation the protein plays a role in virion morphogenesis and mediates the contact with the nucleocapsid like a matrix protein. Its function is as follows. The middle envelope protein plays an important role in the budding of the virion. It is involved in the induction of budding in a nucleocapsid independent way. In this process the majority of envelope proteins bud to form subviral lipoprotein particles of 22 nm of diameter that do not contain a nucleocapsid. This is Large envelope protein from Homo sapiens (Human).